The sequence spans 873 residues: Leucine--tRNA ligase (873 aa).

The 'HIGH' region signature appears at 48 to 58; it reads PYPSGKLHMGH. The 'KMSKS' region motif lies at 636–640; it reads KMSKS. An ATP-binding site is contributed by Lys-639.

The protein belongs to the class-I aminoacyl-tRNA synthetase family.

The protein localises to the cytoplasm. It catalyses the reaction tRNA(Leu) + L-leucine + ATP = L-leucyl-tRNA(Leu) + AMP + diphosphate. The chain is Leucine--tRNA ligase from Cupriavidus pinatubonensis (strain JMP 134 / LMG 1197) (Cupriavidus necator (strain JMP 134)).